Consider the following 290-residue polypeptide: Translin-associated protein X (290 aa).

The disordered stretch occupies residues 1-32 (MSNKEGSGGFRKRKHDNFPHNQRREGKDVNSS). A compositionally biased stretch (basic and acidic residues) spans 16–28 (DNFPHNQRREGKD). Positions 73 to 208 (LLHRITSAPD…MRMCINSVGN (136 aa)) are interaction with C1D. Mg(2+)-binding residues include Glu-129 and Glu-197. A Glycyl lysine isopeptide (Lys-Gly) (interchain with G-Cter in SUMO2) cross-link involves residue Lys-279.

Belongs to the translin family. As to quaternary structure, ring-shaped heterooctamer of six TSN and two TSNAX subunits. Interacts with GOLGA3, TSNAXIP1, SUN1 and AKAP9. Interacts with the homodimeric form of C1D following gamma-radiation. Interacts with TSN and C1D in a mutually exclusive manner. In terms of processing, sumoylated with SUMO1.

The protein localises to the cytoplasm. Its subcellular location is the perinuclear region. It localises to the golgi apparatus. It is found in the nucleus. In terms of biological role, acts in combination with TSN as an endonuclease involved in the activation of the RNA-induced silencing complex (RISC). Possible role in spermatogenesis. The protein is Translin-associated protein X (TSNAX) of Pongo abelii (Sumatran orangutan).